A 353-amino-acid chain; its full sequence is Mas-related G-protein coupled receptor member B5 (353 aa).

Residues 1 to 67 (MPDSPTESYG…SCIITFNTLN (67 aa)) are Extracellular-facing. N-linked (GlcNAc...) asparagine glycans are attached at residues Asn-26 and Asn-44. Residues 68-90 (FLTATISVVGTAGNATVLRLLGF) form a helical membrane-spanning segment. Topologically, residues 91–96 (HMHRYA) are cytoplasmic. The helical transmembrane segment at 97-117 (FSVYVFNLAGADFLYLCTQTV) threads the bilayer. Residues 118 to 131 (YSLECVLQFDNSYF) are Extracellular-facing. Residues 132–152 (YFLLTILMFAYLAALCMIPAI) form a helical membrane-spanning segment. The Cytoplasmic segment spans residues 153-180 (STERCLSVTWPIWYHCQRPRHTSATVCA). A helical transmembrane segment spans residues 181–201 (LFWAFSLLLRLLLGQGCGFLF). Over 202 to 213 (GKYDYYFCRYCS) the chain is Extracellular. A helical transmembrane segment spans residues 214–234 (FITTAFLIVLFVVPFVSSLAM). At 235-253 (LTKIICGSHRIPVTRFYVT) the chain is on the cytoplasmic side. The helical transmembrane segment at 254 to 274 (IAVTVLVFTFFGLPVGIISLL) threads the bilayer. At 275-289 (LPRIVVFRGVFYIYK) the chain is on the extracellular side. A helical transmembrane segment spans residues 290 to 310 (IVTFLYSVNCCANPIIYFLIG). The Cytoplasmic portion of the chain corresponds to 311-353 (SIRHHRLQRQSLKLLLQRAMQDTPEEEGGVKGPSQKSNELEIV). Residues 333–353 (TPEEEGGVKGPSQKSNELEIV) are disordered.

The protein belongs to the G-protein coupled receptor 1 family. Mas subfamily. Expressed strongly in newborn dorsal root ganglia, adult dorsal root ganglia and trigeminal ganlia.

The protein resides in the membrane. Orphan receptor. Probably involved in the function of nociceptive neurons. May regulate nociceptor function and/or development, including the sensation or modulation of pain. This chain is Mas-related G-protein coupled receptor member B5 (Mrgprb5), found in Rattus norvegicus (Rat).